Reading from the N-terminus, the 947-residue chain is Zinc finger protein 268 (947 aa).

Residues 81–152 form the KRAB domain; that stretch reads LSFMDVFVDF…QAQVPNQTCP (72 aa). A Phosphoserine; by TBK1 modification is found at serine 178. C2H2-type zinc fingers lie at residues 276–298, 304–326, 332–354, 360–382, 388–410, 416–438, 444–466, 472–494, 500–522, 528–550, 556–578, 584–606, 612–634, 640–662, 668–690, 696–718, 724–746, 752–774, 780–802, 808–830, 836–858, 864–886, 892–914, and 920–942; these read FGCSCCEKAFSSKSYLLVHQQTH, YGCNECGKDFSSKSYLIVHQRIH, HECSECRKTFSFHSQLVIHQRIH, YECCECGKVFSRKDQLVSHQKTH, YVCNECGKAFGLKSQLIIHERIH, YECNECQKAFNTKSNLMVHQRTH, YVCSDCGKAFTFKSQLIVHQGIH, YGCIQCGKGFSLKSQLIVHQRSH, YVCNECGKAFRSKSYLIIHTRTH, HECNNCGKAFSFKSQLIIHQRIH, YECHECGKAFSRKYQLISHQRTH, YECTDCGKAFGLKSQLIIHQRTH, FECSECQKAFNTKSNLIVHQRTH, YSCNECGKAFTFKSQLIVHKGVH, YGCSQCAKTFSLKSQLIVHQRSH, YGCSECGKAFRSKSYLIIHMRTH, HECRECGKSFSFNSQLIVHQRIH, YECSECGKAFNRKDQLISHQRTH, YGCSECGKAFSSKSYLIIHMRTH, YECNECGKAFIWKSLLIVHERTH, YKCSQCEKSFSGKLRLLVHQRMH, YECSECGKAFIRNSQLIVHQRTH, YGCNECGKTFSQKSILSAHQRTH, and CKCTECGKAFCWKSQLIMHQRTH.

It belongs to the krueppel C2H2-type zinc-finger protein family. Interacts (via the KRAB domain) with TRIM28 (via the RBCC domain); the interaction increases ZNF268 nuclear localization activity. Isoform 2 interacts with CHUK and IKBKB; the interaction is further increased in a TNF-alpha-dependent manner. Interacts with TOLLIP; this interaction is impaired by ZNF268 phosphorylation at Ser-178. Forms a ternary complex with TBK1 and SETD4; the interaction between SETD4 and TBK1 is ZNF268-dependent and leads to TBK1 monomethylation. Phosphorylation at Ser-178 stabilizes the protein by interfering with its binding to TOLLIP, hence impairing its degradation by Tollip-mediated selective autophagy system. Overexpressed in ovarian cancer tissues compared to normal ovarian tissues. Isoform 1 and isoform 2 are expressed in squamous epithelium tissues. Isoform 2 is overexpressed in squamous cervical cancer (at protein level). Expressed in blood cells. Isoform 1 is expressed in pancreas, lung, skeletal muscle, heart, placenta, liver, kidney and brain. Isoform 2 expressed in chronic lymphocytic leukemia (CLL) and several tumor cell lines. Isoform 3 is expressed in several tumor cells. Isoform 5 is expressed in fetal liver and several tumor cells. Isoform 6 is weakly expressed in brain, lung amd small intestin and in several tumor cells. Isoform 7 is expressed in fetal liver and several tumor cells.

Its subcellular location is the nucleus. The protein resides in the cytoplasm. In terms of biological role, acts as a transcriptional repressor. Inhibits erythroid differentiation and tumor cell proliferation. Plays a role during ovarian cancer development and progression. Functionally, contributes to cervical carcinogenesis in part through the TNF-alpha-induced NF-kappa-B signaling pathway by interacting with the I-kappa-B-kinase (IKK) core complex. Involved in the regulation of antiviral interferon signaling. During viral infection, recruits SETD4 to TBK1, leading to TBK1 monomethylation, which is critical for the assembly of TBK1 complex and IRF3 signaling. This Homo sapiens (Human) protein is Zinc finger protein 268 (ZNF268).